The primary structure comprises 87 residues: uncharacterized protein (87 aa).

The disordered stretch occupies residues 43–87; that stretch reads NQGYGQNFGDASGFMGTRSHVDDRDQIDSPASFESEAVNSSIKRK.

This is an uncharacterized protein from Bacillus subtilis (strain 168).